The chain runs to 312 residues: Glyoxylate/hydroxypyruvate reductase A (312 aa).

Arg-227 is a catalytic residue. His-275 acts as the Proton donor in catalysis.

It belongs to the D-isomer specific 2-hydroxyacid dehydrogenase family. GhrA subfamily.

It localises to the cytoplasm. The enzyme catalyses glycolate + NADP(+) = glyoxylate + NADPH + H(+). The catalysed reaction is (R)-glycerate + NAD(+) = 3-hydroxypyruvate + NADH + H(+). It carries out the reaction (R)-glycerate + NADP(+) = 3-hydroxypyruvate + NADPH + H(+). Functionally, catalyzes the NADPH-dependent reduction of glyoxylate and hydroxypyruvate into glycolate and glycerate, respectively. The sequence is that of Glyoxylate/hydroxypyruvate reductase A from Salmonella dublin (strain CT_02021853).